Here is a 2623-residue protein sequence, read N- to C-terminus: Immunoglobulin superfamily member 10 (2623 aa).

The first 28 residues, 1–28, serve as a signal peptide directing secretion; sequence MKVKGRGITCLLVSFAVICLVATPGGKA. The LRRNT domain occupies 29–56; that stretch reads CPRRCACYMPTEVHCTFRYLTSIPDSIP. 6 LRR repeats span residues 58–79, 82–103, 106–127, 130–151, 154–175, and 186–207; these read NVER…DFSG, KLEL…TFSD, ALQV…TFYG, SLTR…VFYG, FLRL…TFVS, and FIKF…MVSY. One can recognise an LRRCT domain in the interval 219 to 281; sequence NPWTCDCHLK…VSAAAFQCAK (63 aa). Residues N319 and N439 are each glycosylated (N-linked (GlcNAc...) asparagine). Ig-like C2-type domains follow at residues 461 to 567 and 571 to 661; these read PRAE…YRIT and PLVE…FQVS. Disulfide bonds link C497-C551 and C595-C645. N-linked (GlcNAc...) asparagine glycosylation is present at N627. Disordered stretches follow at residues 668 to 692 and 767 to 788; these read RPLE…HLKE and AMPD…QLPN. 2 N-linked (GlcNAc...) asparagine glycosylation sites follow: N774 and N999. Disordered regions lie at residues 1334-1376 and 1434-1453; these read TQTE…AMTP and STIA…TTTR. The segment covering 1335-1356 has biased composition (basic and acidic residues); the sequence is QTERSRAQTIQREQEPQKKNRT. Polar residues predominate over residues 1357–1373; it reads DPNISPDQSSGFTTPTA. Ig-like C2-type domains are found at residues 1648-1739, 1745-1836, 1841-1933, 1941-2034, 2037-2135, 2141-2229, 2234-2331, 2337-2427, 2432-2518, and 2528-2623; these read PRIV…VTLS, PRIL…VKIQ, PPVI…VMLT, PRIE…VSLR, PAKI…VHLT, PRIR…YKLD, PPLI…LEVL, PTFR…VILE, PVIL…TLIT, and PRIT…IQVI. 3 cysteine pairs are disulfide-bonded: C1670-C1723, C1767-C1820, and C1864-C1917. N1899 and N1962 each carry an N-linked (GlcNAc...) asparagine glycan. 7 disulfide bridges follow: C1963-C2016, C2060-C2119, C2163-C2213, C2261-C2313, C2359-C2411, C2454-C2506, and C2550-C2605. The N-linked (GlcNAc...) asparagine glycan is linked to N2101. Y2603 is subject to Phosphotyrosine.

It is found in the secreted. Involved in the control of early migration of neurons expressing gonadotropin-releasing hormone (GNRH neurons). May be involved in the maintenance of osteochondroprogenitor cells pool. In Homo sapiens (Human), this protein is Immunoglobulin superfamily member 10 (IGSF10).